The primary structure comprises 519 residues: Glycerophosphoinositol permease 1 (519 aa).

A disordered region spans residues 1 to 32 (MSDLVKSSEVIETTEVPPHNNNNNKRHFKYDS). The chain crosses the membrane as a helical span at residues 39-59 (LAGGVKLKDALMILCAGFALI). A glycan (N-linked (GlcNAc...) asparagine) is linked at Asn-93. 3 helical membrane-spanning segments follow: residues 94–114 (ASLVGTIFGQVIIGLTADYIG), 117–137 (WSIVTATCFLIFGTMMCAASH), and 141–161 (VNGMFWMLTIFRGVTGFGIGA). Asn-175 carries N-linked (GlcNAc...) asparagine glycosylation. 8 helical membrane-spanning segments follow: residues 186 to 206 (ILATNLPLSFGGPFALCIFLI), 216 to 236 (DAIWRTMFAIGCFWPLSVFYF), 273 to 293 (VAWFLYDFVTFPNGIFSAGII), 313 to 333 (LLLGAIALPGVFVGAYVVDIL), 337 to 357 (YTMMIGFCGYIVFGLIVGCGY), 363 to 383 (ITGLFIVFYGLMMSCGNFGPG), 404 to 424 (GISAAIGKVGAVVGTKTFSPI), and 432 to 452 (WTFIIAAICGLAGVLVTFIFI). Positions 487 to 500 (EEEDLEGSSEDSSD) are enriched in acidic residues. A disordered region spans residues 487–519 (EEEDLEGSSEDSSDGEIVKNNTKNDVEKVDALK). Asn-506 carries N-linked (GlcNAc...) asparagine glycosylation. A compositionally biased stretch (basic and acidic residues) spans 508–519 (TKNDVEKVDALK).

Belongs to the major facilitator superfamily. Sugar transporter (TC 2.A.1.1) family.

The protein localises to the cell membrane. The catalysed reaction is sn-glycero-3-phospho-1D-myo-inositol(out) = sn-glycero-3-phospho-1D-myo-inositol(in). Its function is as follows. Glycerophosphodiester transporter that mediates uptake of glycerophosphoinositol (GroPIns) as a source of inositol and phosphate. Does not possess detectable glycerophosphocholine (GroPCho) transport activity. Although no glycerophosphoinositol transport activity occurs in the absence of GIT1, C.albicans is still able to use glycerophosphoinositol as a phosphate source at pH 7.5, albeit slowly. Thus, a second, GIT1-independent, mechanism must exist for utilizing glycerophosphoinositol as a phosphate source at physiological pH. The expanded ability to utilize GroPIns and GroPCho results from the organism's pathogenic nature and its need to occupy a variety of environments within its host organism. This possibility is buttressed by the fact that GroPIns and GroPCho are present and abundant in human fluids. The protein is Glycerophosphoinositol permease 1 of Candida albicans (strain SC5314 / ATCC MYA-2876) (Yeast).